The primary structure comprises 31 residues: Cytochrome b6-f complex subunit 6 (31 aa).

The helical transmembrane segment at 4-26 (LTSYFGFLLAALTITSALFIGLN) threads the bilayer.

The protein belongs to the PetL family. In terms of assembly, the 4 large subunits of the cytochrome b6-f complex are cytochrome b6, subunit IV (17 kDa polypeptide, PetD), cytochrome f and the Rieske protein, while the 4 small subunits are PetG, PetL, PetM and PetN. The complex functions as a dimer.

The protein resides in the plastid. Its subcellular location is the chloroplast thylakoid membrane. Its function is as follows. Component of the cytochrome b6-f complex, which mediates electron transfer between photosystem II (PSII) and photosystem I (PSI), cyclic electron flow around PSI, and state transitions. PetL is important for photoautotrophic growth as well as for electron transfer efficiency and stability of the cytochrome b6-f complex. The protein is Cytochrome b6-f complex subunit 6 of Blitum bonus-henricus (Good King Henry).